Consider the following 73-residue polypeptide: MAIQRGAKVRVLRKESYWYRDVGTVAAVDTSGILYPVIVRFDKINYYNINTNNFREDELEVVEEPKPKAKASS.

It belongs to the PsaE family.

It localises to the cellular thylakoid membrane. Functionally, stabilizes the interaction between PsaC and the PSI core, assists the docking of the ferredoxin to PSI and interacts with ferredoxin-NADP oxidoreductase. In Synechococcus sp. (strain JA-3-3Ab) (Cyanobacteria bacterium Yellowstone A-Prime), this protein is Photosystem I reaction center subunit IV.